Reading from the N-terminus, the 178-residue chain is Ribosome maturation factor RimM (178 aa).

The 78-residue stretch at 101-178 folds into the PRC barrel domain; it reads DGEYYWYQLQ…EMKVEWDADF (78 aa).

The protein belongs to the RimM family. In terms of assembly, binds ribosomal protein uS19.

It is found in the cytoplasm. Its function is as follows. An accessory protein needed during the final step in the assembly of 30S ribosomal subunit, possibly for assembly of the head region. Essential for efficient processing of 16S rRNA. May be needed both before and after RbfA during the maturation of 16S rRNA. It has affinity for free ribosomal 30S subunits but not for 70S ribosomes. In Pseudomonas fluorescens (strain ATCC BAA-477 / NRRL B-23932 / Pf-5), this protein is Ribosome maturation factor RimM.